The chain runs to 179 residues: uncharacterized protein (179 aa).

This is an uncharacterized protein from Rickettsia conorii (strain ATCC VR-613 / Malish 7).